Here is a 274-residue protein sequence, read N- to C-terminus: Putative pyruvate, phosphate dikinase regulatory protein (274 aa).

ADP is bound at residue 149–156; that stretch reads GVSRSSKT.

This sequence belongs to the pyruvate, phosphate/water dikinase regulatory protein family. PDRP subfamily.

The enzyme catalyses N(tele)-phospho-L-histidyl/L-threonyl-[pyruvate, phosphate dikinase] + ADP = N(tele)-phospho-L-histidyl/O-phospho-L-threonyl-[pyruvate, phosphate dikinase] + AMP + H(+). It carries out the reaction N(tele)-phospho-L-histidyl/O-phospho-L-threonyl-[pyruvate, phosphate dikinase] + phosphate + H(+) = N(tele)-phospho-L-histidyl/L-threonyl-[pyruvate, phosphate dikinase] + diphosphate. Bifunctional serine/threonine kinase and phosphorylase involved in the regulation of the pyruvate, phosphate dikinase (PPDK) by catalyzing its phosphorylation/dephosphorylation. The polypeptide is Putative pyruvate, phosphate dikinase regulatory protein (Rhizorhabdus wittichii (strain DSM 6014 / CCUG 31198 / JCM 15750 / NBRC 105917 / EY 4224 / RW1) (Sphingomonas wittichii)).